A 484-amino-acid chain; its full sequence is Glutamate--tRNA ligase (484 aa).

A 'HIGH' region motif is present at residues 11–21 (PSPTGYLHIGN). The 'KMSKS' region motif lies at 252–256 (KLSKR). Residue lysine 255 coordinates ATP.

This sequence belongs to the class-I aminoacyl-tRNA synthetase family. Glutamate--tRNA ligase type 1 subfamily. As to quaternary structure, monomer.

It localises to the cytoplasm. The catalysed reaction is tRNA(Glu) + L-glutamate + ATP = L-glutamyl-tRNA(Glu) + AMP + diphosphate. Functionally, catalyzes the attachment of glutamate to tRNA(Glu) in a two-step reaction: glutamate is first activated by ATP to form Glu-AMP and then transferred to the acceptor end of tRNA(Glu). The polypeptide is Glutamate--tRNA ligase (Staphylococcus aureus (strain COL)).